Here is a 144-residue protein sequence, read N- to C-terminus: Large ribosomal subunit protein uL15 (144 aa).

Residues 1–52 form a disordered region; the sequence is MRLNTLSPAEGAKHSAKRLGRGIGSGLGKTGGRGHKGQKSRTGSGVRRGFEG. Over residues 21–31 the composition is skewed to gly residues; the sequence is RGIGSGLGKTG.

The protein belongs to the universal ribosomal protein uL15 family. Part of the 50S ribosomal subunit.

Functionally, binds to the 23S rRNA. This Haemophilus influenzae (strain 86-028NP) protein is Large ribosomal subunit protein uL15.